A 225-amino-acid chain; its full sequence is MAFKDLPAHARPREKLIARGAAALADAELLALLLRTGVAGKNVLQLAQELLDHFGGLSGLLQTSAEDLKVIKGMGGDAKRAELIAVLELARRAMAERLKERTVFDSPGTVKQYLQLHIGSRPYEVFAVLFLDAQHRLIVLEELFRGTLTQTSVYPREVVTRALHHQAAAVVLSHNHPSGSIEPSRADESLTQTLRAALSLIDVRVLDHVIVSAGQSYSMAEKGLL.

The MPN domain occupies 103–225; it reads VFDSPGTVKQ…SYSMAEKGLL (123 aa). Positions 174, 176, and 187 each coordinate Zn(2+). The JAMM motif signature appears at 174–187; that stretch reads HNHPSGSIEPSRAD.

It belongs to the UPF0758 family.

The protein is UPF0758 protein Vapar_4033 of Variovorax paradoxus (strain S110).